The following is a 463-amino-acid chain: D-inositol 3-phosphate glycosyltransferase (463 aa).

A 1D-myo-inositol 3-phosphate-binding site is contributed by His40. UDP-N-acetyl-alpha-D-glucosamine is bound by residues 46–47 (QP) and Gly54. 1D-myo-inositol 3-phosphate-binding positions include 51–56 (DAGGMN), Lys109, Tyr142, Thr166, and Arg186. UDP-N-acetyl-alpha-D-glucosamine contacts are provided by Arg260, Lys265, and Gln318. Mg(2+) contacts are provided by Phe327, His328, and Val330. UDP-N-acetyl-alpha-D-glucosamine-binding residues include Glu340 and Glu348. Thr354 contributes to the Mg(2+) binding site. The interval 443–463 (VRDPVAARKPRRWTARRGVGA) is disordered.

This sequence belongs to the glycosyltransferase group 1 family. MshA subfamily. In terms of assembly, homodimer.

The catalysed reaction is 1D-myo-inositol 3-phosphate + UDP-N-acetyl-alpha-D-glucosamine = 1D-myo-inositol 2-acetamido-2-deoxy-alpha-D-glucopyranoside 3-phosphate + UDP + H(+). Its function is as follows. Catalyzes the transfer of a N-acetyl-glucosamine moiety to 1D-myo-inositol 3-phosphate to produce 1D-myo-inositol 2-acetamido-2-deoxy-glucopyranoside 3-phosphate in the mycothiol biosynthesis pathway. This Mycobacterium ulcerans (strain Agy99) protein is D-inositol 3-phosphate glycosyltransferase.